Consider the following 527-residue polypeptide: Phosphoenolpyruvate carboxykinase (ATP) (527 aa).

Residues Arg56, Tyr192, and Lys198 each contribute to the substrate site. Residues Lys198, His217, and 233-241 (GLSGTGKTT) contribute to the ATP site. Mn(2+)-binding residues include Lys198 and His217. Residue Asp254 coordinates Mn(2+). Glu282, Arg319, and Thr444 together coordinate ATP. Arg319 contributes to the substrate binding site.

It belongs to the phosphoenolpyruvate carboxykinase (ATP) family. The cofactor is Mn(2+).

Its subcellular location is the cytoplasm. The catalysed reaction is oxaloacetate + ATP = phosphoenolpyruvate + ADP + CO2. It functions in the pathway carbohydrate biosynthesis; gluconeogenesis. Functionally, involved in the gluconeogenesis. Catalyzes the conversion of oxaloacetate (OAA) to phosphoenolpyruvate (PEP) through direct phosphoryl transfer between the nucleoside triphosphate and OAA. The polypeptide is Phosphoenolpyruvate carboxykinase (ATP) (Bacillus subtilis (strain 168)).